A 436-amino-acid polypeptide reads, in one-letter code: MENNNKNINTTNNSTTINTNNNNNPINKNNNNNNINNNNNNNINNINNINNVNNNNNNNNNNNNNNNNNNNNNNNNNNNNNNNNNNINNNNNNINNNNINKKNINNINKNKINNNNNNEIGEEKAVEGGFLAGLSRNVTRIIGSFSSGMAEESAGYPLDLIKTRIQLSQSGVSGGGGTNTSIIKIFKDVIKTEGVIGLFKGLSSPLILSALVTAIQFGLFEDTLKYFRKHQYFKNHDTLSLLFSGSIAGFAQSFITCPVDLVKIQMQIQGIPSSQPNSNNNNNNNKAKGNSYFTKLIYREKGLLGFYQGLSPTLFRDVPGLAIFFTTYETLKKQFGQPELSTQSPTEFIKSFIPIVLSGGSAGVFYHGLTHPFDIAKTLIQSDRSATKYKGTFDCLKQVYQNQGPKSLFKGFSAVAIKSFQSNAVGFLVYEMVINL.

A disordered region spans residues 1 to 102 (MENNNKNINT…NINNNNINKK (102 aa)). Over 1–137 (MENNNKNINT…GGFLAGLSRN (137 aa)) the chain is Mitochondrial intermembrane. 2 Solcar repeats span residues 135 to 226 (SRNV…TLKY) and 236 to 334 (HDTL…LKKQ). The chain crosses the membrane as a helical span at residues 138–158 (VTRIIGSFSSGMAEESAGYPL). At 159–194 (DLIKTRIQLSQSGVSGGGGTNTSIIKIFKDVIKTEG) the chain is on the mitochondrial matrix side. A helical membrane pass occupies residues 195 to 215 (VIGLFKGLSSPLILSALVTAI). Residues 216 to 238 (QFGLFEDTLKYFRKHQYFKNHDT) lie on the Mitochondrial intermembrane side of the membrane. A helical membrane pass occupies residues 239–259 (LSLLFSGSIAGFAQSFITCPV). At 260–313 (DLVKIQMQIQGIPSSQPNSNNNNNNNKAKGNSYFTKLIYREKGLLGFYQGLSPT) the chain is on the mitochondrial matrix side. The chain crosses the membrane as a helical span at residues 314–334 (LFRDVPGLAIFFTTYETLKKQ). The Mitochondrial intermembrane portion of the chain corresponds to 335-347 (FGQPELSTQSPTE). The chain crosses the membrane as a helical span at residues 348-368 (FIKSFIPIVLSGGSAGVFYHG). One copy of the Solcar 3 repeat lies at 350-436 (KSFIPIVLSG…FLVYEMVINL (87 aa)). The Mitochondrial matrix portion of the chain corresponds to 369–413 (LTHPFDIAKTLIQSDRSATKYKGTFDCLKQVYQNQGPKSLFKGFS). Residues 414–434 (AVAIKSFQSNAVGFLVYEMVI) traverse the membrane as a helical segment. Over 435-436 (NL) the chain is Mitochondrial intermembrane.

Belongs to the mitochondrial carrier (TC 2.A.29) family.

The protein resides in the mitochondrion inner membrane. Mitochondrial solute carriers shuttle metabolites, nucleotides, and cofactors through the mitochondrial inner membrane. The polypeptide is Mitochondrial substrate carrier family protein Y (mcfY) (Dictyostelium discoideum (Social amoeba)).